Here is a 1356-residue protein sequence, read N- to C-terminus: Pleckstrin homology domain-containing family H member 1 (1356 aa).

Residues 27 to 172 (FRLQASKIRE…QDALEDLRMT (146 aa)) are a coiled coil. 3 disordered regions span residues 179–203 (VVPEGTPERDPVPSGPSDQPVEQDS), 256–314 (HLQK…PKVR), and 354–414 (LHSP…PPLH). 3 stretches are compositionally biased toward polar residues: residues 194–203 (PSDQPVEQDS), 256–265 (HLQKEGSPSQ), and 285–297 (VTAQGGTFPGTKT). Residues 359-407 (SSKSEARAKVREEAEKMEMEALPPSGKQEERESLKSRRGELEDVELENK) are a coiled coil. Composition is skewed to basic and acidic residues over residues 362-377 (SEARAKVREEAEKMEM) and 385-399 (KQEERESLKSRRGEL). Ser451 carries the post-translational modification Phosphoserine. PH domains are found at residues 572-666 (ALEK…SLLK) and 681-790 (KPTV…VAAG). A Phosphoserine modification is found at Ser739. A MyTH4 domain is found at 826 to 980 (YSQEGLCASL…PSRMEVVSIL (155 aa)). One can recognise an FERM domain in the interval 991–1327 (FSIPVHFANG…NHCSATVNLS (337 aa)).

The sequence is that of Pleckstrin homology domain-containing family H member 1 (Plekhh1) from Mus musculus (Mouse).